A 370-amino-acid polypeptide reads, in one-letter code: GTPase Obg (370 aa).

The region spanning 1–159 (MKFIDEARIE…RMLKLELKVL (159 aa)) is the Obg domain. The disordered stretch occupies residues 128 to 147 (LHFKSSTNRAPRQKTDGKPG). The region spanning 160–334 (ADVGLLGMPN…LCYAIYDYLS (175 aa)) is the OBG-type G domain. GTP-binding positions include 166–173 (GMPNAGKS), 191–195 (FTTLA), 213–216 (DIPG), 284–287 (NKLD), and 315–317 (SAL). S173 and T193 together coordinate Mg(2+).

This sequence belongs to the TRAFAC class OBG-HflX-like GTPase superfamily. OBG GTPase family. As to quaternary structure, monomer. Mg(2+) serves as cofactor.

Its subcellular location is the cytoplasm. An essential GTPase which binds GTP, GDP and possibly (p)ppGpp with moderate affinity, with high nucleotide exchange rates and a fairly low GTP hydrolysis rate. Plays a role in control of the cell cycle, stress response, ribosome biogenesis and in those bacteria that undergo differentiation, in morphogenesis control. This chain is GTPase Obg, found in Burkholderia cenocepacia (strain ATCC BAA-245 / DSM 16553 / LMG 16656 / NCTC 13227 / J2315 / CF5610) (Burkholderia cepacia (strain J2315)).